The chain runs to 141 residues: uncharacterized protein (141 aa).

2 helical membrane passes run 20–42 (FLVN…FCLA) and 52–74 (LHLC…IFTL).

The protein localises to the cell membrane. This is an uncharacterized protein from Archaeoglobus fulgidus (strain ATCC 49558 / DSM 4304 / JCM 9628 / NBRC 100126 / VC-16).